We begin with the raw amino-acid sequence, 126 residues long: Fluoride-specific ion channel FluC (126 aa).

A run of 4 helical transmembrane segments spans residues 6 to 26 (FVAVGVGAAAGAWLRWGFAVL), 36 to 56 (YGTLAANLLGGYLVGLAVGFF), 69 to 89 (LAITGFLGGLTTFSTFSSEVV), and 99 to 119 (WAGLHLLLHLGGSLLLTAFGL). Residues Gly-76 and Thr-79 each contribute to the Na(+) site.

This sequence belongs to the fluoride channel Fluc/FEX (TC 1.A.43) family.

It localises to the cell inner membrane. It carries out the reaction fluoride(in) = fluoride(out). Its activity is regulated as follows. Na(+) is not transported, but it plays an essential structural role and its presence is essential for fluoride channel function. Functionally, fluoride-specific ion channel. Important for reducing fluoride concentration in the cell, thus reducing its toxicity. The polypeptide is Fluoride-specific ion channel FluC (Cupriavidus necator (strain ATCC 17699 / DSM 428 / KCTC 22496 / NCIMB 10442 / H16 / Stanier 337) (Ralstonia eutropha)).